The primary structure comprises 385 residues: Cytochrome b (385 aa).

Residues 1-27 (MRLLKSHPLLKLVNSYLIDASQPSNIS) lie on the Mitochondrial matrix side of the membrane. An a ubiquinone-binding site is contributed by tyrosine 16. A helical transmembrane segment spans residues 28–51 (YLWNFGSLLACCLIIQIVTGVTLA). The Mitochondrial intermembrane segment spans residues 52–74 (MHYSPNVLEAFNSIEHIMRDVNN). A helical membrane pass occupies residues 75 to 102 (GWLVRYLHSNTASAFFFLVYLHIGRGMY). Heme b-binding residues include histidine 82 and histidine 96. Residues 103 to 110 (YGSYRAPR) lie on the Mitochondrial matrix side of the membrane. Residues 111-135 (TLVWAIGTVILILMMATAFLGYVLP) traverse the membrane as a helical segment. Residues 136–172 (YGQMSLWGATVITNLISAIPWIGQDIVEFIWGGFSVN) lie on the Mitochondrial intermembrane side of the membrane. The chain crosses the membrane as a helical span at residues 173–205 (NATLNRFFALHFVLPFILAALVLMHLIALHDTA). Histidine 183 and histidine 197 together coordinate heme b. Position 202 (histidine 202) interacts with a ubiquinone. The Mitochondrial matrix portion of the chain corresponds to 206-224 (GSSNPLGVSGNYDRITFAP). A helical membrane pass occupies residues 225-247 (YYLFKDLITIFIFIYVLSSFVFF). The Mitochondrial intermembrane portion of the chain corresponds to 248-288 (MPNVLGDSENYIMANPMQTPPAIVPEWYLLPFYAILRSIPN). A helical membrane pass occupies residues 289 to 309 (KLLGVIAMFSAILAIMLLPIT). The Mitochondrial matrix portion of the chain corresponds to 310–320 (DLGRSKGLQFR). A helical transmembrane segment spans residues 321–341 (PLSKFAFWAFVVNFLILMKLG). Residues 342-348 (ACHVESP) lie on the Mitochondrial intermembrane side of the membrane. A helical transmembrane segment spans residues 349–365 (FIELGQFSTIFYFSYFI). Residues 366-385 (FIVPVLSLIENTLVDLNYLK) lie on the Mitochondrial matrix side of the membrane.

Belongs to the cytochrome b family. Component of the ubiquinol-cytochrome c oxidoreductase (cytochrome b-c1 complex, complex III, CIII), a multisubunit enzyme composed of 10 subunits. The complex is composed of 3 respiratory subunits cytochrome b (cob), cytochrome c1 (cyt-1) and Rieske protein (fes-1), 2 core protein subunits pep and ucr-1, and 5 low-molecular weight protein subunits qcr6, qcr7, qcr8, qcr9 and probably NCU16844/qcr10. The complex exists as an obligatory dimer and forms supercomplexes (SCs) in the inner mitochondrial membrane with NADH-ubiquinone oxidoreductase (complex I, CI) and cytochrome c oxidase (complex IV, CIV), resulting in different assemblies (supercomplexes SCI(1)III(2), SCIII(2)IV(1) and SCIII(2)IV(2) as well as higher order I(x)III(y)IV(z) megacomplexes). Heme b is required as a cofactor.

The protein resides in the mitochondrion inner membrane. The enzyme catalyses a quinol + 2 Fe(III)-[cytochrome c](out) = a quinone + 2 Fe(II)-[cytochrome c](out) + 2 H(+)(out). Component of the ubiquinol-cytochrome c oxidoreductase, a multisubunit transmembrane complex that is part of the mitochondrial electron transport chain which drives oxidative phosphorylation. The respiratory chain contains 3 multisubunit complexes succinate dehydrogenase (complex II, CII), ubiquinol-cytochrome c oxidoreductase (cytochrome b-c1 complex, complex III, CIII) and cytochrome c oxidase (complex IV, CIV), that cooperate to transfer electrons derived from NADH and succinate to molecular oxygen, creating an electrochemical gradient over the inner membrane that drives transmembrane transport and the ATP synthase. The cytochrome b-c1 complex catalyzes electron transfer from ubiquinol to cytochrome c, linking this redox reaction to translocation of protons across the mitochondrial inner membrane, with protons being carried across the membrane as hydrogens on the quinol. In the process called Q cycle, 2 protons are consumed from the matrix, 4 protons are released into the intermembrane space and 2 electrons are passed to cytochrome c. Cytochrome b is a catalytic core subunit containing 2 b-type hemes BL and BH topographically segregated in the quinone reduction (Qi) and quinol oxidation (Q0) sites on opposite sides of the membrane. The chain is Cytochrome b (cob) from Neurospora crassa (strain ATCC 24698 / 74-OR23-1A / CBS 708.71 / DSM 1257 / FGSC 987).